The following is a 360-amino-acid chain: Protein Wnt-2 (360 aa).

Positions 1-25 (MNAPLGGIWLWLPLLLTWLTPEVSS) are cleaved as a signal peptide. 11 cysteine pairs are disulfide-bonded: Cys76/Cys87, Cys127/Cys135, Cys137/Cys157, Cys206/Cys220, Cys208/Cys215, Cys278/Cys309, Cys294/Cys304, Cys308/Cys348, Cys324/Cys339, Cys326/Cys336, and Cys331/Cys332. Ser212 carries the O-palmitoleoyl serine; by PORCN lipid modification. Asn295 is a glycosylation site (N-linked (GlcNAc...) asparagine).

Belongs to the Wnt family. Post-translationally, palmitoleoylation is required for efficient binding to frizzled receptors. Depalmitoleoylation leads to Wnt signaling pathway inhibition.

Its subcellular location is the secreted. It is found in the extracellular space. The protein resides in the extracellular matrix. Its function is as follows. Ligand for members of the frizzled family of seven transmembrane receptors. Functions in the canonical Wnt signaling pathway that results in activation of transcription factors of the TCF/LEF family. Functions as a upstream regulator of FGF10 expression. Plays an important role in embryonic lung development. May contribute to embryonic brain development by regulating the proliferation of dopaminergic precursors and neurons. The chain is Protein Wnt-2 (WNT2) from Equus caballus (Horse).